The chain runs to 541 residues: Neutral amino acid transporter B(0) (541 aa).

Methionine 1 carries the N-acetylmethionine modification. Positions 1–10 are enriched in basic and acidic residues; it reads MVADPPKGDP. Residues 1–32 are disordered; it reads MVADPPKGDPKGLAAVEPTANGAPAQDPLEDS. The Cytoplasmic portion of the chain corresponds to 1 to 52; sequence MVADPPKGDPKGLAAVEPTANGAPAQDPLEDSGAAVGRCCSSRDQVRRCLRA. The chain crosses the membrane as a helical span at residues 53–82; the sequence is NLLVLLTVVAVVAGVALGLAVSGAGGALAL. The Extracellular portion of the chain corresponds to 83–95; that stretch reads GPARLIAFAFPGE. The chain crosses the membrane as a helical span at residues 96-117; that stretch reads LLLRLLKMIILPLVVCSLVGGA. Over 118–131 the chain is Cytoplasmic; it reads ASLDPSALGRLGAW. A helical transmembrane segment spans residues 132 to 154; that stretch reads ALLFFLVTTLLASALGVGLALAL. Residues 155-225 are Extracellular-facing; sequence QPGAAFAAMN…GTLVKVPVAH (71 aa). Asparagine 164 and asparagine 215 each carry an N-linked (GlcNAc...) asparagine glycan. The chain crosses the membrane as a helical span at residues 226–249; the sequence is EEEGMNILGLVVFAIVFGVALRKL. The Cytoplasmic portion of the chain corresponds to 250 to 258; that stretch reads GPEGEPLIR. Residues 259–286 form a helical membrane-spanning segment; it reads FFNSFNDATMVLVSWIMWYAPVGILFLV. Over 287–307 the chain is Extracellular; the sequence is ASKIVEMDDVGVLFASLGKYI. Residues 308–329 form a helical membrane-spanning segment; it reads LCCLLGHAIHGLLVLPLIYFLF. The Cytoplasmic portion of the chain corresponds to 330-334; it reads TRKNP. The segment at residues 335-365 is an intramembrane region (discontinuously helical); the sequence is YRFLWGILTPLAMAFGTSSSSATLPLMMKCV. At 366-374 the chain is on the cytoplasmic side; it reads EERNGVAKH. A helical membrane pass occupies residues 375–401; that stretch reads ISRFVLPIGATVNMDGAALFQCVAAVF. Positions 383, 385, and 387 each coordinate Na(+). Residues 402–414 lie on the Extracellular side of the membrane; it reads IAQLNRQSLDFVK. Residues 415–448 constitute an intramembrane region (discontinuously helical); that stretch reads IITILVTATASSVGAAGIPAGGVLTLAIILEAVS. Over 449–461 the chain is Extracellular; that stretch reads LPVSEISLILAVD. Residues 462–483 traverse the membrane as a helical segment; that stretch reads WLVDRSCTIINVEGDAFGAGLL. Residues asparagine 472 and aspartate 476 each coordinate Na(+). Topologically, residues 484–541 are cytoplasmic; sequence QHYVDRTEQRGSEPELTQVKSEVPLGSLPAPNEEGNPLLRHSPGAAGDAGACEKESVM. The segment at 493 to 541 is disordered; it reads RGSEPELTQVKSEVPLGSLPAPNEEGNPLLRHSPGAAGDAGACEKESVM. Residues serine 495, serine 504, and serine 539 each carry the phosphoserine modification.

This sequence belongs to the dicarboxylate/amino acid:cation symporter (DAACS) (TC 2.A.23) family. SLC1A5 subfamily. Homotrimer.

It localises to the cell membrane. Its subcellular location is the melanosome. The enzyme catalyses L-glutamine(out) + L-serine(in) + Na(+)(out) = L-glutamine(in) + L-serine(out) + Na(+)(in). It catalyses the reaction L-glutamine(in) + L-serine(out) + Na(+)(out) = L-glutamine(out) + L-serine(in) + Na(+)(in). The catalysed reaction is L-threonine(in) + L-glutamine(out) + Na(+)(out) = L-threonine(out) + L-glutamine(in) + Na(+)(in). It carries out the reaction L-threonine(out) + L-glutamine(in) + Na(+)(out) = L-threonine(in) + L-glutamine(out) + Na(+)(in). The enzyme catalyses L-asparagine(in) + L-glutamine(out) + Na(+)(out) = L-asparagine(out) + L-glutamine(in) + Na(+)(in). It catalyses the reaction L-asparagine(out) + L-glutamine(in) + Na(+)(out) = L-asparagine(in) + L-glutamine(out) + Na(+)(in). The catalysed reaction is L-glutamine(in) + L-alanine(out) + Na(+)(out) = L-glutamine(out) + L-alanine(in) + Na(+)(in). It carries out the reaction L-valine(out) + L-glutamine(in) + Na(+)(out) = L-valine(in) + L-glutamine(out) + Na(+)(in). The enzyme catalyses L-glutamine(in) + L-methionine(out) + Na(+)(out) = L-glutamine(out) + L-methionine(in) + Na(+)(in). It catalyses the reaction L-glutamine(in) + L-glutamate(out) + Na(+)(out) + H(+)(out) = L-glutamine(out) + L-glutamate(in) + Na(+)(in) + H(+)(in). The catalysed reaction is D-serine(in) + L-glutamine(out) + Na(+)(out) = D-serine(out) + L-glutamine(in) + Na(+)(in). It carries out the reaction D-serine(in) + L-alanine(out) + Na(+)(out) = D-serine(out) + L-alanine(in) + Na(+)(in). The enzyme catalyses nitrate(in) = nitrate(out). It catalyses the reaction iodide(out) = iodide(in). The catalysed reaction is thiocyanate(in) = thiocyanate(out). Its function is as follows. Sodium-coupled antiporter of neutral amino acids. In a tri-substrate transport cycle, exchanges neutral amino acids between the extracellular and intracellular compartments, coupled to the inward cotransport of at least one sodium ion. The preferred substrate is the essential amino acid L-glutamine, a precursor for biosynthesis of proteins, nucleotides and amine sugars as well as an alternative fuel for mitochondrial oxidative phosphorylation. Exchanges L-glutamine with other neutral amino acids such as L-serine, L-threonine and L-asparagine in a bidirectional way. Provides L-glutamine to proliferating stem and activated cells driving the metabolic switch toward cell differentiation. The transport cycle is usually pH-independent, with the exception of L-glutamate. Transports extracellular L-glutamate coupled to the cotransport of one proton and one sodium ion in exchange for intracellular L-glutamine counter-ion. May provide for L-glutamate uptake in glial cells regulating glutamine/glutamate cycle in the nervous system. Can transport D-amino acids. Mediates D-serine release from the retinal glia potentially affecting NMDA receptor function in retinal neurons. Displays sodium- and amino acid-dependent but uncoupled channel-like anion conductance with a preference SCN(-) &gt;&gt; NO3(-) &gt; I(-) &gt; Cl(-). Through binding of the fusogenic protein syncytin-1/ERVW-1 may mediate trophoblasts syncytialization, the spontaneous fusion of their plasma membranes, an essential process in placental development. This Oryctolagus cuniculus (Rabbit) protein is Neutral amino acid transporter B(0) (SLC1A5).